A 1040-amino-acid chain; its full sequence is Multidrug resistance protein MdtB (1040 aa).

12 consecutive transmembrane segments (helical) span residues 25 to 45 (LLMA…PVAA), 347 to 367 (LMLA…NIPA), 369 to 389 (IIPG…MVFL), 396 to 416 (LTLM…IVVI), 440 to 460 (IGFT…PLLF), 472 to 492 (FAVT…TLTP), 537 to 557 (WLTL…WIVI), 863 to 883 (LGST…VLGV), 888 to 908 (FIHP…ALLA), 910 to 930 (IIAG…LIGI), 968 to 988 (ILMT…STGV), and 998 to 1018 (IAMV…TPVI).

The protein belongs to the resistance-nodulation-cell division (RND) (TC 2.A.6) family. MdtB subfamily. Part of a tripartite efflux system composed of MdtA, MdtB and MdtC. MdtB forms a heteromultimer with MdtC.

It is found in the cell inner membrane. The chain is Multidrug resistance protein MdtB from Salmonella paratyphi A (strain ATCC 9150 / SARB42).